We begin with the raw amino-acid sequence, 193 residues long: Peptidyl-tRNA hydrolase (193 aa).

Y17 lines the tRNA pocket. H22 (proton acceptor) is an active-site residue. The tRNA site is built by F68, N70, and N116.

This sequence belongs to the PTH family. In terms of assembly, monomer.

It localises to the cytoplasm. The enzyme catalyses an N-acyl-L-alpha-aminoacyl-tRNA + H2O = an N-acyl-L-amino acid + a tRNA + H(+). Functionally, hydrolyzes ribosome-free peptidyl-tRNAs (with 1 or more amino acids incorporated), which drop off the ribosome during protein synthesis, or as a result of ribosome stalling. Catalyzes the release of premature peptidyl moieties from peptidyl-tRNA molecules trapped in stalled 50S ribosomal subunits, and thus maintains levels of free tRNAs and 50S ribosomes. This Acinetobacter baylyi (strain ATCC 33305 / BD413 / ADP1) protein is Peptidyl-tRNA hydrolase.